Reading from the N-terminus, the 389-residue chain is Succinate--CoA ligase [ADP-forming] subunit beta (389 aa).

One can recognise an ATP-grasp domain in the interval 9 to 244 (KAVLAKYGVP…LTEEDPAEVE (236 aa)). Residues Lys-46, 53-55 (GRG), Glu-99, Ser-102, and Glu-107 each bind ATP. Asn-199 and Asp-213 together coordinate Mg(2+). Substrate contacts are provided by residues Asn-264 and 321-323 (GIM).

Belongs to the succinate/malate CoA ligase beta subunit family. In terms of assembly, heterotetramer of two alpha and two beta subunits. The cofactor is Mg(2+).

It catalyses the reaction succinate + ATP + CoA = succinyl-CoA + ADP + phosphate. The enzyme catalyses GTP + succinate + CoA = succinyl-CoA + GDP + phosphate. It functions in the pathway carbohydrate metabolism; tricarboxylic acid cycle; succinate from succinyl-CoA (ligase route): step 1/1. Its function is as follows. Succinyl-CoA synthetase functions in the citric acid cycle (TCA), coupling the hydrolysis of succinyl-CoA to the synthesis of either ATP or GTP and thus represents the only step of substrate-level phosphorylation in the TCA. The beta subunit provides nucleotide specificity of the enzyme and binds the substrate succinate, while the binding sites for coenzyme A and phosphate are found in the alpha subunit. In Parvibaculum lavamentivorans (strain DS-1 / DSM 13023 / NCIMB 13966), this protein is Succinate--CoA ligase [ADP-forming] subunit beta.